Here is a 101-residue protein sequence, read N- to C-terminus: Small ribosomal subunit protein uS14 (101 aa).

Belongs to the universal ribosomal protein uS14 family. In terms of assembly, part of the 30S ribosomal subunit. Contacts proteins S3 and S10.

Binds 16S rRNA, required for the assembly of 30S particles and may also be responsible for determining the conformation of the 16S rRNA at the A site. This is Small ribosomal subunit protein uS14 from Shewanella denitrificans (strain OS217 / ATCC BAA-1090 / DSM 15013).